A 304-amino-acid polypeptide reads, in one-letter code: Prephenate dehydratase (304 aa).

The Prephenate dehydratase domain occupies 3 to 178; sequence RIAYFGPVGT…ARTRFLLMRR (176 aa). The region spanning 193 to 271 is the ACT domain; the sequence is SIVAAAANRT…DVRFLGSFAR (79 aa).

It catalyses the reaction prephenate + H(+) = 3-phenylpyruvate + CO2 + H2O. The protein operates within amino-acid biosynthesis; L-phenylalanine biosynthesis; phenylpyruvate from prephenate: step 1/1. This Amycolatopsis methanolica protein is Prephenate dehydratase (pheA).